We begin with the raw amino-acid sequence, 266 residues long: Thymidylate synthase (266 aa).

Residues R20 and 129–130 (RR) contribute to the dUMP site. C149 (nucleophile) is an active-site residue. DUMP contacts are provided by residues 169 to 172 (RSCD), N180, and 210 to 212 (HVY). D172 contacts (6R)-5,10-methylene-5,6,7,8-tetrahydrofolate. (6R)-5,10-methylene-5,6,7,8-tetrahydrofolate is bound at residue A265.

The protein belongs to the thymidylate synthase family. Bacterial-type ThyA subfamily. Homodimer.

It localises to the cytoplasm. It carries out the reaction dUMP + (6R)-5,10-methylene-5,6,7,8-tetrahydrofolate = 7,8-dihydrofolate + dTMP. It functions in the pathway pyrimidine metabolism; dTTP biosynthesis. Catalyzes the reductive methylation of 2'-deoxyuridine-5'-monophosphate (dUMP) to 2'-deoxythymidine-5'-monophosphate (dTMP) while utilizing 5,10-methylenetetrahydrofolate (mTHF) as the methyl donor and reductant in the reaction, yielding dihydrofolate (DHF) as a by-product. This enzymatic reaction provides an intracellular de novo source of dTMP, an essential precursor for DNA biosynthesis. In Bifidobacterium longum (strain NCC 2705), this protein is Thymidylate synthase.